The following is a 100-amino-acid chain: Large ribosomal subunit protein uL23 (100 aa).

It belongs to the universal ribosomal protein uL23 family. In terms of assembly, part of the 50S ribosomal subunit. Contacts protein L29, and trigger factor when it is bound to the ribosome.

Functionally, one of the early assembly proteins it binds 23S rRNA. One of the proteins that surrounds the polypeptide exit tunnel on the outside of the ribosome. Forms the main docking site for trigger factor binding to the ribosome. The protein is Large ribosomal subunit protein uL23 of Baumannia cicadellinicola subsp. Homalodisca coagulata.